The primary structure comprises 236 residues: Small ribosomal subunit protein uS2c (236 aa).

The protein belongs to the universal ribosomal protein uS2 family.

It is found in the plastid. It localises to the chloroplast. The protein is Small ribosomal subunit protein uS2c (rps2) of Ipomoea purpurea (Common morning glory).